Consider the following 269-residue polypeptide: 3-ketodihydrosphingosine reductase (269 aa).

6 residues coordinate NADPH: G10, S12, S13, G14, K36, and D50. The GXSXG motif lies at 10-14 (GASSG). S12 serves as the catalytic Nucleophile; for lipase activity. The Proton donor role is filled by S128. Catalysis depends on Y142, which acts as the Proton acceptor. Residues Y142 and K146 each contribute to the NADP(+) site. NADPH is bound by residues 142 to 146 (YSASK) and 175 to 177 (FNT). K146 is an active-site residue. The Lowers pKa of active site Tyr role is filled by K146.

The protein belongs to the short-chain dehydrogenases/reductases (SDR) family.

It carries out the reaction sphinganine + NADP(+) = 3-oxosphinganine + NADPH + H(+). Its pathway is lipid metabolism; sphingolipid metabolism. In terms of biological role, catalyzes the reduction of 3'-oxosphinganine (3-ketodihydrosphingosine/KDS) to sphinganine (dihydrosphingosine/DHS), the second step of de novo sphingolipid biosynthesis. This Bacteroides thetaiotaomicron (strain ATCC 29148 / DSM 2079 / JCM 5827 / CCUG 10774 / NCTC 10582 / VPI-5482 / E50) protein is 3-ketodihydrosphingosine reductase.